We begin with the raw amino-acid sequence, 316 residues long: C1GALT1-specific chaperone 1 (316 aa).

The Cytoplasmic portion of the chain corresponds to 1 to 6; it reads MLSESS. The helical; Signal-anchor for type II membrane protein transmembrane segment at 7–26 threads the bilayer; it reads SFLKGVMLGSIFCALITMLG. Topologically, residues 27 to 316 are lumenal; sequence HIRIGNRMHH…FLPPNGSEND (290 aa).

The protein belongs to the glycosyltransferase 31 family. Beta3-Gal-T subfamily. As to quaternary structure, associates with core 1 beta-3-galactosyltransferase (C1GALT1), probably not with the soluble active form.

It localises to the membrane. Its function is as follows. Probable chaperone required for the generation of 1 O-glycan Gal-beta1-3GalNAc-alpha1-Ser/Thr (T antigen), which is a precursor for many extended O-glycans in glycoproteins. Probably acts as a specific molecular chaperone assisting the folding/stability of core 1 beta-3-galactosyltransferase (C1GALT1). This chain is C1GALT1-specific chaperone 1 (C1galt1c1), found in Rattus norvegicus (Rat).